Consider the following 121-residue polypeptide: Large ribosomal subunit protein bL12 (121 aa).

This sequence belongs to the bacterial ribosomal protein bL12 family. In terms of assembly, homodimer. Part of the ribosomal stalk of the 50S ribosomal subunit. Forms a multimeric L10(L12)X complex, where L10 forms an elongated spine to which 2 to 4 L12 dimers bind in a sequential fashion. Binds GTP-bound translation factors.

Its function is as follows. Forms part of the ribosomal stalk which helps the ribosome interact with GTP-bound translation factors. Is thus essential for accurate translation. This is Large ribosomal subunit protein bL12 from Shewanella frigidimarina (strain NCIMB 400).